A 302-amino-acid chain; its full sequence is Acetyl-coenzyme A carboxylase carboxyl transferase subunit beta (302 aa).

Residues 25-294 (VWTKCDSCGQ…PHFDEAAPVS (270 aa)) form the CoA carboxyltransferase N-terminal domain. Zn(2+) contacts are provided by Cys-29, Cys-32, Cys-48, and Cys-51. The C4-type zinc finger occupies 29 to 51 (CDSCGQVLYRAELERNLEVCPKC). Residues 281 to 302 (NQPQPHFDEAAPVSEQENQADA) are disordered.

It belongs to the AccD/PCCB family. As to quaternary structure, acetyl-CoA carboxylase is a heterohexamer composed of biotin carboxyl carrier protein (AccB), biotin carboxylase (AccC) and two subunits each of ACCase subunit alpha (AccA) and ACCase subunit beta (AccD). Zn(2+) serves as cofactor.

The protein resides in the cytoplasm. The enzyme catalyses N(6)-carboxybiotinyl-L-lysyl-[protein] + acetyl-CoA = N(6)-biotinyl-L-lysyl-[protein] + malonyl-CoA. It functions in the pathway lipid metabolism; malonyl-CoA biosynthesis; malonyl-CoA from acetyl-CoA: step 1/1. In terms of biological role, component of the acetyl coenzyme A carboxylase (ACC) complex. Biotin carboxylase (BC) catalyzes the carboxylation of biotin on its carrier protein (BCCP) and then the CO(2) group is transferred by the transcarboxylase to acetyl-CoA to form malonyl-CoA. This is Acetyl-coenzyme A carboxylase carboxyl transferase subunit beta from Serratia proteamaculans (strain 568).